The primary structure comprises 209 residues: MDLARQIAMELLDIQAVYLRPQQPFTWASGVKSPIYTDNRVTLSYPETRTLIENGFVKQIQKHFPNVDIIAGTATAGIPHGAIIADKMNLPFAYIRSKAKDHGVGNQIEGRVYSGQKMVIIEDLISTGGSVLEAVTAAQSQGIEVLGVVAIFTYQLAKAEQAFREADIPLVTLTDYNQLIKVAKVNGYITADQLVLLKKFKEDQMNWQS.

5-phospho-alpha-D-ribose 1-diphosphate-binding positions include Arg96, Lys100, His102, and 122 to 130; that span reads EDLISTGGS. Ser126 lines the orotate pocket.

It belongs to the purine/pyrimidine phosphoribosyltransferase family. PyrE subfamily. As to quaternary structure, homodimer. Requires Mg(2+) as cofactor.

The enzyme catalyses orotidine 5'-phosphate + diphosphate = orotate + 5-phospho-alpha-D-ribose 1-diphosphate. Its pathway is pyrimidine metabolism; UMP biosynthesis via de novo pathway; UMP from orotate: step 1/2. Catalyzes the transfer of a ribosyl phosphate group from 5-phosphoribose 1-diphosphate to orotate, leading to the formation of orotidine monophosphate (OMP). The polypeptide is Orotate phosphoribosyltransferase (Streptococcus agalactiae serotype III (strain NEM316)).